A 314-amino-acid polypeptide reads, in one-letter code: Dihydroorotate dehydrogenase (fumarate) (314 aa).

Substrate is bound by residues Lys46, 70–74 (NSMGL), and Asn130. Residue 46–47 (KS) coordinates FMN. Asn130 is a binding site for FMN. Catalysis depends on nucleophile residues Ser132 and Cys133. FMN contacts are provided by Lys167 and Ile195. 196–197 (NS) contributes to the substrate binding site. Residues Gly224, 252-253 (GG), and 274-275 (GT) contribute to the FMN site.

This sequence belongs to the dihydroorotate dehydrogenase family. Type 1 subfamily. In terms of assembly, homodimer. It depends on FMN as a cofactor.

The protein localises to the cytoplasm. The catalysed reaction is (S)-dihydroorotate + fumarate = orotate + succinate. Its pathway is pyrimidine metabolism; UMP biosynthesis via de novo pathway. Functionally, catalyzes the conversion of dihydroorotate to orotate with fumarate as the electron acceptor. The protein is Dihydroorotate dehydrogenase (fumarate) (URA1) of Saccharomyces bayanus (Yeast).